We begin with the raw amino-acid sequence, 476 residues long: Ureidoglycolate hydrolase (476 aa).

The N-terminal stretch at 1–25 is a signal peptide; it reads MESLKRFLCSIALLLISLLLPSSLA. Residues H138, D149, E184, and H254 each coordinate Mn(2+). Residues 183–184, 254–257, H290, N340, R353, 423–424, and H448 each bind substrate; these read EE, HIEQ, and YH. The interval 276–391 is involved in dimerization; sequence APASLKVEFE…LSEFKIVNQD (116 aa). Residue H448 coordinates Mn(2+).

The protein belongs to the peptidase M20 family. As to quaternary structure, homodimer. The cofactor is Mn(2+). Ni(2+) serves as cofactor. Requires Co(2+) as cofactor.

It is found in the endoplasmic reticulum. The enzyme catalyses (S)-ureidoglycolate + H2O + 2 H(+) = glyoxylate + 2 NH4(+) + CO2. Its pathway is nitrogen metabolism; (S)-allantoin degradation; glyoxylate from (S)-ureidoglycolate: step 1/1. Involved in the catabolism of purine nucleotides. Can use (S)-ureidoglycolate as substrate, but not (R)-ureidoglycolate or allantoate. The sequential activity of AAH, UGLYAH and UAH allows a complete purine breakdown without the intermediate generation of urea. This Arabidopsis thaliana (Mouse-ear cress) protein is Ureidoglycolate hydrolase.